The following is a 332-amino-acid chain: MKVTFEELKGAFYRVLRSRNIAEDTADECAEMFARTTESGVYSHGVNRFPRFIQQLDNGDIIPDAKPQRVTSLGAIEQWDAQRAIGNLTAKKMMDRAIELASDHGIGLVALRNANHWMRGGSYGWQAAEKGYIGICWTNSIAVMPPWGAKECRIGTNPLIVAIPSTPITMVDMSMSMFSYGMLEVNRLAGRELSVDGGFDDNGQLTKEPGVIEKNRRILPMGYWKGSGLSIVLDMIATLLSNGSSVAEVTQENSDEYGVSQIFIAIEVDKLIDGATRDAKLQRIMDFITTAERADDNVAIRLPGHEFTKLLDDNRRHGITIDDSVWAKIQAL.

The active-site Proton donor is His-44. Residues 168–174 (ITMVDMS), 224–225 (WK), and 304–306 (GHE) each bind NAD(+).

It belongs to the LDH2/MDH2 oxidoreductase family. DlgD subfamily. Homodimer.

It localises to the cytoplasm. The enzyme catalyses 3-dehydro-L-gulonate + NAD(+) = 2,3-dioxo-L-gulonate + NADH + H(+). It carries out the reaction 3-dehydro-L-gulonate + NADP(+) = 2,3-dioxo-L-gulonate + NADPH + H(+). Catalyzes the reduction of 2,3-diketo-L-gulonate in the presence of NADH, to form 3-keto-L-gulonate. This is 2,3-diketo-L-gulonate reductase from Salmonella paratyphi C (strain RKS4594).